A 103-amino-acid chain; its full sequence is Large ribosomal subunit protein bL21 (103 aa).

Belongs to the bacterial ribosomal protein bL21 family. As to quaternary structure, part of the 50S ribosomal subunit. Contacts protein L20.

This protein binds to 23S rRNA in the presence of protein L20. The protein is Large ribosomal subunit protein bL21 of Nitrosospira multiformis (strain ATCC 25196 / NCIMB 11849 / C 71).